A 205-amino-acid chain; its full sequence is Thymidylate kinase (205 aa).

ATP is bound at residue Gly-9–Thr-16.

The protein belongs to the thymidylate kinase family.

It catalyses the reaction dTMP + ATP = dTDP + ADP. Its function is as follows. Phosphorylation of dTMP to form dTDP in both de novo and salvage pathways of dTTP synthesis. In Staphylococcus aureus (strain MSSA476), this protein is Thymidylate kinase.